Consider the following 461-residue polypeptide: Nuclear distribution protein PAC1 (461 aa).

Residues 9 to 41 form the LisH domain; the sequence is QAEELHKAIIAYLSANNLSSSATALRTELGLAE. A coiled-coil region spans residues 61–88; the sequence is TSVVRLQKKIMDLESRNNALQSELDNAT. 8 WD repeats span residues 114 to 155, 157 to 197, 201 to 248, 251 to 290, 295 to 355, 357 to 396, 401 to 444, and 446 to 461; these read SHQN…RTIK, HTRP…KNIR, GHDH…CLKT, GHTAWIRDVYPSLDGRYLLSTGDDSTVRLWDLSVTNPENR, GHDH…LKTL, GHDNWVRALVFHPGGRYLLSVSDDKTLRCWDLEQDGKCVK, VHER…VRIR, and VIATGSVDMKLRIFAN.

Belongs to the WD repeat LIS1/nudF family. In terms of assembly, self-associates. Interacts with NDL1 and dynein.

It localises to the cytoplasm. The protein resides in the cytoskeleton. Its subcellular location is the spindle pole. Functionally, positively regulates the activity of the minus-end directed microtubule motor protein dynein. May enhance dynein-mediated microtubule sliding by targeting dynein to the microtubule plus end. Required for nuclear migration during vegetative growth as well as development. Required for retrograde early endosome (EE) transport from the hyphal tip. Required for localization of dynein to the mitotic spindle poles. Recruits additional proteins to the dynein complex at SPBs. In Pyricularia oryzae (strain 70-15 / ATCC MYA-4617 / FGSC 8958) (Rice blast fungus), this protein is Nuclear distribution protein PAC1.